A 437-amino-acid chain; its full sequence is Adenosylhomocysteinase (437 aa).

Positions 58, 133, and 158 each coordinate substrate. 159–161 contributes to the NAD(+) binding site; that stretch reads TTT. K188 and D192 together coordinate substrate. Residues N193, 224 to 229, E245, 301 to 303, and N348 contribute to the NAD(+) site; these read GDVGKG and VGH.

Belongs to the adenosylhomocysteinase family. In terms of assembly, homotetramer. NAD(+) serves as cofactor.

The enzyme catalyses S-adenosyl-L-homocysteine + H2O = L-homocysteine + adenosine. The protein operates within amino-acid biosynthesis; L-homocysteine biosynthesis; L-homocysteine from S-adenosyl-L-homocysteine: step 1/1. In terms of biological role, adenosylhomocysteine is a competitive inhibitor of S-adenosyl-L-methionine-dependent methyl transferase reactions; therefore adenosylhomocysteinase may play a key role in the control of methylations via regulation of the intracellular concentration of adenosylhomocysteine. This Caenorhabditis elegans protein is Adenosylhomocysteinase (ahcy-1).